Consider the following 760-residue polypeptide: Penicillin-binding protein 1B (760 aa).

The Cytoplasmic portion of the chain corresponds to 1-8; that stretch reads MFFNFKKY. Residues 9–29 form a helical; Signal-anchor for type II membrane protein membrane-spanning segment; sequence FLIKVFFFVLILTLCYGLYLY. The Extracellular segment spans residues 30 to 760; sequence VKINRFINGK…NFLFWLKNLF (731 aa). Residues 136–308 form a transglycosylase region; sequence FRLEPKLIAM…SLYSPWTNPN (173 aa). Residue Glu-174 is the Proton donor; for transglycosylase activity of the active site. Residues 392-684 are transpeptidase; the sequence is EQAVKIEIPI…SSGAMQIYKR (293 aa). Ser-451 serves as the catalytic Acyl-ester intermediate; for transpeptidase activity.

It in the N-terminal section; belongs to the glycosyltransferase 51 family. This sequence in the C-terminal section; belongs to the transpeptidase family.

It localises to the cell membrane. The enzyme catalyses [GlcNAc-(1-&gt;4)-Mur2Ac(oyl-L-Ala-gamma-D-Glu-L-Lys-D-Ala-D-Ala)](n)-di-trans,octa-cis-undecaprenyl diphosphate + beta-D-GlcNAc-(1-&gt;4)-Mur2Ac(oyl-L-Ala-gamma-D-Glu-L-Lys-D-Ala-D-Ala)-di-trans,octa-cis-undecaprenyl diphosphate = [GlcNAc-(1-&gt;4)-Mur2Ac(oyl-L-Ala-gamma-D-Glu-L-Lys-D-Ala-D-Ala)](n+1)-di-trans,octa-cis-undecaprenyl diphosphate + di-trans,octa-cis-undecaprenyl diphosphate + H(+). It carries out the reaction Preferential cleavage: (Ac)2-L-Lys-D-Ala-|-D-Ala. Also transpeptidation of peptidyl-alanyl moieties that are N-acyl substituents of D-alanine.. The protein operates within cell wall biogenesis; peptidoglycan biosynthesis. Cell wall formation. Synthesis of cross-linked peptidoglycan from the lipid intermediates. The enzyme has a penicillin-insensitive transglycosylase N-terminal domain (formation of linear glycan strands) and a penicillin-sensitive transpeptidase C-terminal domain (cross-linking of the peptide subunits). The polypeptide is Penicillin-binding protein 1B (mrcB) (Buchnera aphidicola subsp. Acyrthosiphon pisum (strain APS) (Acyrthosiphon pisum symbiotic bacterium)).